Reading from the N-terminus, the 206-residue chain is Xanthine phosphoribosyltransferase (206 aa).

Residues Leu28 and Asn35 each contribute to the xanthine site. 136–140 (ANGQA) contacts 5-phospho-alpha-D-ribose 1-diphosphate. Lys164 lines the xanthine pocket.

Belongs to the purine/pyrimidine phosphoribosyltransferase family. Xpt subfamily. Homodimer.

Its subcellular location is the cytoplasm. It carries out the reaction XMP + diphosphate = xanthine + 5-phospho-alpha-D-ribose 1-diphosphate. Its pathway is purine metabolism; XMP biosynthesis via salvage pathway; XMP from xanthine: step 1/1. Its function is as follows. Converts the preformed base xanthine, a product of nucleic acid breakdown, to xanthosine 5'-monophosphate (XMP), so it can be reused for RNA or DNA synthesis. The sequence is that of Xanthine phosphoribosyltransferase from Oenococcus oeni (strain ATCC BAA-331 / PSU-1).